A 257-amino-acid polypeptide reads, in one-letter code: Transmembrane protein 101 (257 aa).

8 helical membrane-spanning segments follow: residues 24–40 (TRCP…LYAE), 52–72 (VPYL…MSFG), 77–97 (WFAL…YIGG), 110–130 (YSRT…AGEL), 139–159 (SLQS…AYSL), 182–202 (LFFV…YVTL), 206–226 (ILAV…SYWH), and 233–253 (FWNQ…AVIL).

The protein localises to the membrane. Functionally, may activate NF-kappa-B signaling pathways. The protein is Transmembrane protein 101 (Tmem101) of Mus musculus (Mouse).